The sequence spans 380 residues: M-protease (380 aa).

Positions 1–27 (MKKPLGKIVASTALLISVAFSSSIASA) are cleaved as a signal peptide. Residues 28–111 (AEEAKEKYLI…IEEDAEVTTM (84 aa)) constitute a propeptide that is removed on maturation. Residues 34–111 (KYLIGFNEQE…IEEDAEVTTM (78 aa)) form the Inhibitor I9 domain. Gln113 serves as a coordination point for Ca(2+). The region spanning 116 to 379 (PWGISRVQAP…SGLVNAEAAT (264 aa)) is the Peptidase S8 domain. Asp143 functions as the Charge relay system in the catalytic mechanism. Ca(2+) is bound at residue Asp151. His173 serves as the catalytic Charge relay system. Positions 184, 186, 188, 190, 274, 276, 279, and 302 each coordinate Ca(2+). Ser326 (charge relay system) is an active-site residue.

This sequence belongs to the peptidase S8 family. As to quaternary structure, monomer. It depends on Ca(2+) as a cofactor.

The protein localises to the secreted. With respect to regulation, activity is inhibited by phenylmethylsulfonyl fluoride and chymostatin. Alkaline serine protease that cleaves various substrates, including N-succinyl-Ala-Ala-Pro-Phe-pNA, N-succinyl-Ala-Ala-Pro-MetpNA, oxidized insulin B chain, casein, hemoglobin and scleroproteins, such as keratin, alpha-keratin and elastin. This Shouchella clausii (strain KSM-K16) (Alkalihalobacillus clausii) protein is M-protease (aprE).